Consider the following 344-residue polypeptide: Enoyl-[acyl-carrier-protein] reductase, mitochondrial (344 aa).

The N-terminal 14 residues, 1–14 (MLKVLSLRSALQRA), are a transit peptide targeting the mitochondrion. The active-site Proton donor is Tyr-69. NADP(+)-binding positions include Asn-142, 168-171 (NSAV), 191-193 (RSR), 255-258 (YGGM), 280-282 (FWM), and Lys-338.

Belongs to the zinc-containing alcohol dehydrogenase family. Quinone oxidoreductase subfamily. In terms of assembly, homodimer.

Its subcellular location is the mitochondrion. It catalyses the reaction a 2,3-saturated acyl-[ACP] + NADP(+) = a (2E)-enoyl-[ACP] + NADPH + H(+). In terms of biological role, catalyzes the NADPH-dependent reduction of trans-2-enoyl thioesters in mitochondrial fatty acid synthesis (fatty acid synthesis type II). Fatty acid chain elongation in mitochondria uses acyl carrier protein (ACP) as an acyl group carrier, but the enzyme accepts both ACP and CoA thioesters as substrates in vitro. May provide the octanoyl chain used for lipoic acid biosynthesis, regulating protein lipoylation and mitochondrial respiratory activity. Involved in iron homeostasis; affecting Fe-S cluster assembly and ceramide metabolism. Required for proper morphology and bioenergetic functions of mitochondria. Required for maintenance of neurons. This is Enoyl-[acyl-carrier-protein] reductase, mitochondrial from Caenorhabditis elegans.